The chain runs to 614 residues: ATP-dependent zinc metalloprotease FtsH (614 aa).

Residues 1–5 are Cytoplasmic-facing; that stretch reads MLPIR. A helical transmembrane segment spans residues 6–26; sequence WFLALLAVFLAVAGLDLWFSQ. Residues 27-127 are Periplasmic-facing; the sequence is TGARPSSATG…AVSARERTAS (101 aa). Residues 128–148 traverse the membrane as a helical segment; it reads IVHAIVHPLGLITLIVGILFV. The Cytoplasmic portion of the chain corresponds to 149-614; it reads VQRYAGRFTA…AQHPPSALAG (466 aa). 214-221 lines the ATP pocket; it reads GPPGTGKT. H436 provides a ligand contact to Zn(2+). E437 is a catalytic residue. 2 residues coordinate Zn(2+): H440 and D513.

In the central section; belongs to the AAA ATPase family. This sequence in the C-terminal section; belongs to the peptidase M41 family. As to quaternary structure, homohexamer. Requires Zn(2+) as cofactor.

The protein localises to the cell inner membrane. In terms of biological role, acts as a processive, ATP-dependent zinc metallopeptidase for both cytoplasmic and membrane proteins. Plays a role in the quality control of integral membrane proteins. The sequence is that of ATP-dependent zinc metalloprotease FtsH from Opitutus terrae (strain DSM 11246 / JCM 15787 / PB90-1).